The sequence spans 159 residues: Ribosomal RNA large subunit methyltransferase H (159 aa).

S-adenosyl-L-methionine is bound by residues Leu76, Gly108, and 127-132; that span reads FSKMTL.

It belongs to the RNA methyltransferase RlmH family. As to quaternary structure, homodimer.

The protein localises to the cytoplasm. It catalyses the reaction pseudouridine(1915) in 23S rRNA + S-adenosyl-L-methionine = N(3)-methylpseudouridine(1915) in 23S rRNA + S-adenosyl-L-homocysteine + H(+). In terms of biological role, specifically methylates the pseudouridine at position 1915 (m3Psi1915) in 23S rRNA. The chain is Ribosomal RNA large subunit methyltransferase H from Bacillus cytotoxicus (strain DSM 22905 / CIP 110041 / 391-98 / NVH 391-98).